We begin with the raw amino-acid sequence, 98 residues long: Large ribosomal subunit protein bL27 (98 aa).

The segment at 1–22 is disordered; that stretch reads MAHKKGTGSTRNGRDSNAQRLG. Residues 7-19 show a composition bias toward polar residues; it reads TGSTRNGRDSNAQ.

The protein belongs to the bacterial ribosomal protein bL27 family.

This is Large ribosomal subunit protein bL27 from Nostoc punctiforme (strain ATCC 29133 / PCC 73102).